We begin with the raw amino-acid sequence, 89 residues long: Small ribosomal subunit protein uS15 (89 aa).

Belongs to the universal ribosomal protein uS15 family. In terms of assembly, part of the 30S ribosomal subunit. Forms a bridge to the 50S subunit in the 70S ribosome, contacting the 23S rRNA.

In terms of biological role, one of the primary rRNA binding proteins, it binds directly to 16S rRNA where it helps nucleate assembly of the platform of the 30S subunit by binding and bridging several RNA helices of the 16S rRNA. Forms an intersubunit bridge (bridge B4) with the 23S rRNA of the 50S subunit in the ribosome. The protein is Small ribosomal subunit protein uS15 of Streptococcus pyogenes serotype M2 (strain MGAS10270).